The following is a 288-amino-acid chain: Peroxisomal membrane protein pex13 (288 aa).

The disordered stretch occupies residues 1–32; the sequence is METNQNEKGPSLPSYPAGGIMSVSNSNADTNQ. Polar residues predominate over residues 22–32; that stretch reads SVSNSNADTNQ. Residues 178 to 198 traverse the membrane as a helical segment; that stretch reads IYSIVSSLAIILGLVGLPYAI. Residues 222-288 enclose the SH3 domain; the sequence is DSLEFCKADY…PSNYCSIISR (67 aa).

This sequence belongs to the peroxin-13 family. As to quaternary structure, interacts (via SH3 domain) with PEX14 (via SH3-binding motif); forming the PEX13-PEX14 docking complex.

Its subcellular location is the peroxisome membrane. In terms of biological role, component of the PEX13-PEX14 docking complex, a translocon channel that specifically mediates the import of peroxisomal cargo proteins bound to PEX5 receptor. The PEX13-PEX14 docking complex forms a large import pore which can be opened to a diameter of about 9 nm. Mechanistically, PEX5 receptor along with cargo proteins associates with the PEX14 subunit of the PEX13-PEX14 docking complex in the cytosol, leading to the insertion of the receptor into the organelle membrane with the concomitant translocation of the cargo into the peroxisome matrix. The protein is Peroxisomal membrane protein pex13 (pex13) of Schizosaccharomyces pombe (strain 972 / ATCC 24843) (Fission yeast).